We begin with the raw amino-acid sequence, 501 residues long: L-arabinose isomerase (501 aa).

Mn(2+) is bound by residues glutamate 306, glutamate 333, histidine 350, and histidine 450.

Belongs to the arabinose isomerase family. As to quaternary structure, homohexamer. Mn(2+) is required as a cofactor.

The catalysed reaction is beta-L-arabinopyranose = L-ribulose. It participates in carbohydrate degradation; L-arabinose degradation via L-ribulose; D-xylulose 5-phosphate from L-arabinose (bacterial route): step 1/3. In terms of biological role, catalyzes the conversion of L-arabinose to L-ribulose. This is L-arabinose isomerase from Erwinia tasmaniensis (strain DSM 17950 / CFBP 7177 / CIP 109463 / NCPPB 4357 / Et1/99).